The primary structure comprises 774 residues: Ion-translocating oxidoreductase complex subunit C (774 aa).

4Fe-4S ferredoxin-type domains lie at glutamate 359 to histidine 389 and glutamine 399 to tyrosine 428. 8 residues coordinate [4Fe-4S] cluster: cysteine 369, cysteine 372, cysteine 375, cysteine 379, cysteine 408, cysteine 411, cysteine 414, and cysteine 418. Over residues glutamate 453–alanine 490 the composition is skewed to basic and acidic residues. The tract at residues glutamate 453–alanine 493 is disordered.

It belongs to the 4Fe4S bacterial-type ferredoxin family. RnfC subfamily. As to quaternary structure, the complex is composed of six subunits: RnfA, RnfB, RnfC, RnfD, RnfE and RnfG. Requires [4Fe-4S] cluster as cofactor.

Its subcellular location is the cell inner membrane. Functionally, part of a membrane-bound complex that couples electron transfer with translocation of ions across the membrane. The sequence is that of Ion-translocating oxidoreductase complex subunit C from Pseudomonas aeruginosa (strain ATCC 15692 / DSM 22644 / CIP 104116 / JCM 14847 / LMG 12228 / 1C / PRS 101 / PAO1).